The sequence spans 185 residues: Elongation factor P (185 aa).

The protein belongs to the elongation factor P family.

The protein localises to the cytoplasm. It participates in protein biosynthesis; polypeptide chain elongation. Involved in peptide bond synthesis. Stimulates efficient translation and peptide-bond synthesis on native or reconstituted 70S ribosomes in vitro. Probably functions indirectly by altering the affinity of the ribosome for aminoacyl-tRNA, thus increasing their reactivity as acceptors for peptidyl transferase. The sequence is that of Elongation factor P from Bordetella bronchiseptica (strain ATCC BAA-588 / NCTC 13252 / RB50) (Alcaligenes bronchisepticus).